Reading from the N-terminus, the 1013-residue chain is EF-hand calcium-binding domain-containing protein 6 (1013 aa).

EF-hand domains are found at residues 20-55 (KNIKTVMKAFKLIDVNKTGLVRPQELRRVLETFCLK), 145-180 (KSYEKIEKALSAGDPCKGGYVSFNYLKIVLDTFIYQ), 251-286 (DRSASLKKALLIINTKPDGPITREEFRYILNCVAIK), 287-322 (LSDSEFKELMQILDPGDTGVVNTSMFIDLIEENCRM), and 352-387 (RNLQAFYNMLRSYDLGDTGLIGRNNFKKIMHVFCPF). A disordered region spans residues 441 to 460 (QKDEQQQPDLSERTKPTEDK). EF-hand domains lie at 482–517 (QQDPAFKKRFLDFSKEPNGKINVHDFRKILEDTGMP), 589–624 (ESFRDPYSAFFKTDVDRDGIINMHDLHRLLLHLLLN), 695–730 (NRWSDLSKNFLETDNEGNGILRRRDIKNALYGFDIP), 731–766 (LTPREFEKLWARYNTEGKGHITYQEFLQKLGINYSP), 812–847 (DLHQDISKAFTKIDKSKTNYISICKMQKVLEECGCS), and 917–952 (SSQLALSTAFSALDKEDTGFVKATEFGQVLKDFCYK). Residues Asp602, Asp604, Asp606, and Asp613 each coordinate Ca(2+). Thr732 carries the post-translational modification Phosphothreonine.

As to quaternary structure, microtubule inner protein component of sperm flagellar doublet microtubules. Binds PARK7. Part of a ternary complex containing PARK7, EFCAB6/DJBP and AR.

Its subcellular location is the nucleus. The protein resides in the cytoplasm. It localises to the cytoskeleton. It is found in the flagellum axoneme. In terms of biological role, negatively regulates the androgen receptor by recruiting histone deacetylase complex, and protein DJ-1 antagonizes this inhibition by abrogation of this complex. Microtubule inner protein (MIP) part of the dynein-decorated doublet microtubules (DMTs) in cilia axoneme, which is required for motile cilia beating. This is EF-hand calcium-binding domain-containing protein 6 (EFCAB6) from Pongo abelii (Sumatran orangutan).